The sequence spans 449 residues: Type 3 secretion system ATPase (449 aa).

ATP is bound at residue G178–T183.

It belongs to the ATPase alpha/beta chains family. T3SS ATPase subfamily. In terms of assembly, the core secretion machinery of the T3SS is composed of approximately 20 different proteins, including cytoplasmic components, a base, an export apparatus and a needle. This subunit is part of the cytosolic complex. Forms homododecamers. Comprises two hexameric rings that are probably stacked face-to-face by the association of their C-terminal domains. Also present as monomer and homohexamer in solution.

It is found in the cytoplasm. The catalysed reaction is ATP + H2O + cellular proteinSide 1 = ADP + phosphate + cellular proteinSide 2.. Oligomerization increases ATPase activity. ATPase component of the type III secretion system (T3SS), also called injectisome, which is used to inject bacterial effector proteins into eukaryotic host cells. Acts as a molecular motor to provide the energy that is required for the export of proteins. Required for type III secretion apparatus (T3SA) formation, proper protein secretion, host cell invasion and virulence. May play a critical role in T3SS substrate recognition, disassembly of the effector/chaperone complex and unfolding of the effector in an ATP-dependent manner prior to secretion. This is Type 3 secretion system ATPase from Pseudomonas savastanoi pv. phaseolicola (Pseudomonas syringae pv. phaseolicola).